Here is a 447-residue protein sequence, read N- to C-terminus: Tubulin beta chain (447 aa).

GTP-binding residues include Q11, E69, S138, G142, T143, G144, N204, and N226. Mg(2+) is bound at residue E69. Positions 425–447 are disordered; it reads YQDASISEGEEEYEEEVPIEGEE. Residues 432 to 447 show a composition bias toward acidic residues; sequence EGEEEYEEEVPIEGEE.

The protein belongs to the tubulin family. Dimer of alpha and beta chains. A typical microtubule is a hollow water-filled tube with an outer diameter of 25 nm and an inner diameter of 15 nM. Alpha-beta heterodimers associate head-to-tail to form protofilaments running lengthwise along the microtubule wall with the beta-tubulin subunit facing the microtubule plus end conferring a structural polarity. Microtubules usually have 13 protofilaments but different protofilament numbers can be found in some organisms and specialized cells. Mg(2+) is required as a cofactor.

It localises to the cytoplasm. It is found in the cytoskeleton. Functionally, tubulin is the major constituent of microtubules, a cylinder consisting of laterally associated linear protofilaments composed of alpha- and beta-tubulin heterodimers. Microtubules grow by the addition of GTP-tubulin dimers to the microtubule end, where a stabilizing cap forms. Below the cap, tubulin dimers are in GDP-bound state, owing to GTPase activity of alpha-tubulin. The sequence is that of Tubulin beta chain (tubA) from Botryotinia fuckeliana (Noble rot fungus).